The following is a 338-amino-acid chain: Ribosomal RNA small subunit methyltransferase H (338 aa).

Residues 53-55, Asp-72, Tyr-99, Asp-123, and Gln-130 contribute to the S-adenosyl-L-methionine site; that span reads GGH. Positions 277 to 298 are disordered; the sequence is ITPRSKSKSPEGLPVELPGMGP.

It belongs to the methyltransferase superfamily. RsmH family.

The protein resides in the cytoplasm. The enzyme catalyses cytidine(1402) in 16S rRNA + S-adenosyl-L-methionine = N(4)-methylcytidine(1402) in 16S rRNA + S-adenosyl-L-homocysteine + H(+). Functionally, specifically methylates the N4 position of cytidine in position 1402 (C1402) of 16S rRNA. This chain is Ribosomal RNA small subunit methyltransferase H, found in Rhodococcus opacus (strain B4).